A 718-amino-acid polypeptide reads, in one-letter code: Polyribonucleotide nucleotidyltransferase (718 aa).

Mg(2+) is bound by residues D497 and D503. Residues 564–623 form the KH domain; the sequence is PRLLTMRIDPDMIGLVIGPGGKTVKSITEQTKTKIDIDDDGTVTISASEAEQAERAKQLI. The S1 motif domain maps to 633–701; it reads GEVYVGRVTR…NKGRLNLTRL (69 aa).

Belongs to the polyribonucleotide nucleotidyltransferase family. Requires Mg(2+) as cofactor.

Its subcellular location is the cytoplasm. The catalysed reaction is RNA(n+1) + phosphate = RNA(n) + a ribonucleoside 5'-diphosphate. In terms of biological role, involved in mRNA degradation. Catalyzes the phosphorolysis of single-stranded polyribonucleotides processively in the 3'- to 5'-direction. This chain is Polyribonucleotide nucleotidyltransferase, found in Gloeothece citriformis (strain PCC 7424) (Cyanothece sp. (strain PCC 7424)).